We begin with the raw amino-acid sequence, 188 residues long: CASP-like protein 4B3 (188 aa).

The disordered stretch occupies residues Met-1 to Val-21. Topologically, residues Met-1 to Leu-42 are cytoplasmic. A helical membrane pass occupies residues Leu-43 to Val-63. The Extracellular segment spans residues His-64–Pro-76. A helical transmembrane segment spans residues Glu-77 to Val-97. Residues Arg-98–Lys-114 lie on the Cytoplasmic side of the membrane. A helical membrane pass occupies residues Ala-115–Leu-135. Topologically, residues Ser-136–Ser-156 are extracellular. N-linked (GlcNAc...) asparagine glycosylation occurs at Asn-154. Residues Ala-157–Ile-177 form a helical membrane-spanning segment. Residues Ser-178–Val-188 are Cytoplasmic-facing.

The protein belongs to the Casparian strip membrane proteins (CASP) family. Homodimer and heterodimers.

It is found in the cell membrane. The chain is CASP-like protein 4B3 from Hordeum vulgare subsp. vulgare (Domesticated barley).